The chain runs to 128 residues: Riboflavin kinase (128 aa).

Residue 12-17 (GKGEGK) participates in CDP binding. Mg(2+) contacts are provided by Thr-41 and Asn-43. Residues Thr-97 and Glu-105 each contribute to the FMN site. Residue 110–113 (IKLR) participates in CDP binding.

Belongs to the archaeal riboflavin kinase family. It depends on Mg(2+) as a cofactor.

The enzyme catalyses riboflavin + CTP = CDP + FMN + H(+). It functions in the pathway cofactor biosynthesis; FMN biosynthesis; FMN from riboflavin (CTP route): step 1/1. Functionally, catalyzes the CTP-dependent phosphorylation of riboflavin (vitamin B2) to form flavin mononucleotide (FMN). The polypeptide is Riboflavin kinase (Methanococcus aeolicus (strain ATCC BAA-1280 / DSM 17508 / OCM 812 / Nankai-3)).